The sequence spans 724 residues: DNA ligase (724 aa).

NAD(+)-binding positions include 44–48 (DADYD), 93–94 (SL), and Glu-127. Lys-129 acts as the N6-AMP-lysine intermediate in catalysis. Positions 150, 186, 307, and 331 each coordinate NAD(+). Cys-437, Cys-440, Cys-461, and Cys-467 together coordinate Zn(2+). A BRCT domain is found at 646–724 (TEGSPVAGKT…EDEWLALIGG (79 aa)).

It belongs to the NAD-dependent DNA ligase family. LigA subfamily. Mg(2+) serves as cofactor. Mn(2+) is required as a cofactor.

The catalysed reaction is NAD(+) + (deoxyribonucleotide)n-3'-hydroxyl + 5'-phospho-(deoxyribonucleotide)m = (deoxyribonucleotide)n+m + AMP + beta-nicotinamide D-nucleotide.. Functionally, DNA ligase that catalyzes the formation of phosphodiester linkages between 5'-phosphoryl and 3'-hydroxyl groups in double-stranded DNA using NAD as a coenzyme and as the energy source for the reaction. It is essential for DNA replication and repair of damaged DNA. The polypeptide is DNA ligase (Agrobacterium fabrum (strain C58 / ATCC 33970) (Agrobacterium tumefaciens (strain C58))).